The primary structure comprises 276 residues: MLLRFTKMHGLGNDFMVLDLISQHAHVQPKHAKQWGDRHTGVGFDQLLIVEPPSHPDVDFRYRIFNSDGSEVEQCGNGARCFARFVLDKRLTTKKTIRVETKSGVIELRVQNDGQVCVNMGAPRLEPAQVPFQAEQAALTYRVDVEGQSVELAALSMGNPHAVLRVDNVDSAPVHTLGPKLEHHPRFPQRVNVGFLQVLDRKHARLRVWERGAGETQACGTGACAAAVAAIRQGWMDSPVQLELPGGKLSIEWAGEGQPVMMTGPAARVYEGQVRL.

3 residues coordinate substrate: Asn13, Gln46, and Asn66. The active-site Proton donor is the Cys75. Residues 76 to 77 (GN), Asn159, Asn192, and 210 to 211 (ER) each bind substrate. Cys219 acts as the Proton acceptor in catalysis. Position 220–221 (220–221 (GT)) interacts with substrate.

Belongs to the diaminopimelate epimerase family. Homodimer.

It is found in the cytoplasm. It catalyses the reaction (2S,6S)-2,6-diaminopimelate = meso-2,6-diaminopimelate. Its pathway is amino-acid biosynthesis; L-lysine biosynthesis via DAP pathway; DL-2,6-diaminopimelate from LL-2,6-diaminopimelate: step 1/1. Catalyzes the stereoinversion of LL-2,6-diaminopimelate (L,L-DAP) to meso-diaminopimelate (meso-DAP), a precursor of L-lysine and an essential component of the bacterial peptidoglycan. The sequence is that of Diaminopimelate epimerase from Ectopseudomonas mendocina (strain ymp) (Pseudomonas mendocina).